The following is a 625-amino-acid chain: MAU2 chromatid cohesion factor homolog (625 aa).

TPR repeat units lie at residues 96–129 (FDTASLLAQLHLKTEQSSHAKAMLRRAVELSQNN), 451–484 (GGFYYVQGLHAFHKNSFHEAKRFLRETLKMANAE), and 491–524 (SCSLVLLSHVFLSIGNSKESMNMVTPAMQLASKI). The segment covering 600–611 (TVPTTETSTSAL) has biased composition (polar residues). Residues 600 to 625 (TVPTTETSTSALQQPQQPAAQFGQFY) are disordered. The span at 612–625 (QQPQQPAAQFGQFY) shows a compositional bias: low complexity.

It belongs to the SCC4/mau-2 family. As to quaternary structure, interacts with Nipped-B to form the cohesin loading complex.

It is found in the nucleus. The protein localises to the nucleoplasm. In terms of biological role, required for association of the cohesin complex with chromatin during interphase. Plays a role in sister chromatid cohesion and normal progression through prometaphase. The chain is MAU2 chromatid cohesion factor homolog from Drosophila mojavensis (Fruit fly).